The sequence spans 210 residues: MPDSSHSISSKDVASAISLYDQSIYTNNRSTNLDLDQRSMSPSNIASGEDRITRTNSGCSITSGASMIATKDGIQGINVKRDGIPKYSLNLLNSMVRKQYDHNNGTKSPTPKTSNMVDPKNKKKNKKKKNDKDDKYKVSHDQTEKFYKLNTTSNSNLTSDSTTSLSDQFYFQKSNADSAPLDNANYPLSDHSPSLNSMDNTTKHSSNVHT.

Ser-18, Ser-39, Ser-41, Ser-57, and Ser-60 each carry phosphoserine. Polar residues predominate over residues 33-46 (LDLDQRSMSPSNIA). The disordered stretch occupies residues 33 to 58 (LDLDQRSMSPSNIASGEDRITRTNSG). Disordered stretches follow at residues 100 to 139 (YDHN…YKVS) and 177 to 210 (DSAP…NVHT). A compositionally biased stretch (polar residues) spans 102–116 (HNNGTKSPTPKTSNM). Positions 130-139 (NDKDDKYKVS) are enriched in basic and acidic residues. Residues Ser-178, Ser-189, and Ser-192 each carry the phosphoserine modification. Residues 191 to 210 (HSPSLNSMDNTTKHSSNVHT) show a composition bias toward polar residues.

This is an uncharacterized protein from Saccharomyces cerevisiae (strain ATCC 204508 / S288c) (Baker's yeast).